Reading from the N-terminus, the 358-residue chain is MFDKLDQLEEKYEELSRLISDPEVIADTQRWQGYVKAHAEIEEIVQVYREYKKTVKEIEDAERMLDEKLDPDFRELVQSELHDLKERREELEAKLKILLLPKDPNDEKNVIMEIRAGAGGEEAALFAGDLFRMYSKYADRMGWKVEIMDSHPTDLGGFKEVIFTIEGKGVYSRMKFESGVHRVQRVPTTESGGRIHTSTATVAVLPEAEEVEVEINPNDLRIDVFCASGAGGQHVNKTESAVRITHIPTGIVVTCQDEKSQHKNKERAMKILRARLLDKARQEQEAELASARKSQVGTGDRSERIRTYNFPQNRVTDHRIGLTLHRLDAVLEGDLDEIIDALITTDQAERLKQVDGNA.

At Q233 the chain carries N5-methylglutamine. Residues 286 to 309 (AELASARKSQVGTGDRSERIRTYN) are disordered.

It belongs to the prokaryotic/mitochondrial release factor family. Post-translationally, methylated by PrmC. Methylation increases the termination efficiency of RF1.

Its subcellular location is the cytoplasm. Peptide chain release factor 1 directs the termination of translation in response to the peptide chain termination codons UAG and UAA. This is Peptide chain release factor 1 from Carboxydothermus hydrogenoformans (strain ATCC BAA-161 / DSM 6008 / Z-2901).